A 426-amino-acid chain; its full sequence is Glutamate-1-semialdehyde 2,1-aminomutase (426 aa).

N6-(pyridoxal phosphate)lysine is present on lysine 265.

This sequence belongs to the class-III pyridoxal-phosphate-dependent aminotransferase family. HemL subfamily. Homodimer. Pyridoxal 5'-phosphate serves as cofactor.

It localises to the cytoplasm. It catalyses the reaction (S)-4-amino-5-oxopentanoate = 5-aminolevulinate. It participates in porphyrin-containing compound metabolism; protoporphyrin-IX biosynthesis; 5-aminolevulinate from L-glutamyl-tRNA(Glu): step 2/2. The polypeptide is Glutamate-1-semialdehyde 2,1-aminomutase (Salmonella heidelberg (strain SL476)).